The primary structure comprises 446 residues: MREIVHVQGGQCGNQIGAKFWEVISDEHGVDPTGTYHGDSDLQLERINVYYNEATGGRYVPRAVLMDLEPGTMDSVRAGPFGQLFRPDNFVFGQTGAGNNWAKGHYTEGAELIDSVLDVVRKEAEGCDCLQGFQITHSLGGGTGSGMGTLLISKIREEYPDRIMETFSVFPSPKVSDTVVEPYNATLSVHQLVENADEVMVIDNEALYDICFRTLKLTTPTYGDLNHLVSACISGVTSCLRFPGQLNSDLRKLAVNLIPFPRLHFFMVGFAPLTSRGSQQYRALTVPELTQQMFDAKNMMCASDPRHGRYLTASAMFRGRMSTKEVDEQMLNVQNKNSSYFVEWIPNNIKSSVCDIPPKGLKLASTFIGNSTAIQEMFKRVAEQFTAMFRRKAFLHWYTGEGMDEMEFTEAESNMNDLVSEYQQYQDATAEEEGEYVEDEDEMDGM.

GTP-binding residues include Gln11, Glu69, Ser138, Gly142, Thr143, Gly144, Asn204, and Asn226. Position 69 (Glu69) interacts with Mg(2+). The tract at residues 426-446 (QDATAEEEGEYVEDEDEMDGM) is disordered. Residues 429 to 446 (TAEEEGEYVEDEDEMDGM) are compositionally biased toward acidic residues.

This sequence belongs to the tubulin family. In terms of assembly, dimer of alpha and beta chains. A typical microtubule is a hollow water-filled tube with an outer diameter of 25 nm and an inner diameter of 15 nM. Alpha-beta heterodimers associate head-to-tail to form protofilaments running lengthwise along the microtubule wall with the beta-tubulin subunit facing the microtubule plus end conferring a structural polarity. Microtubules usually have 13 protofilaments but different protofilament numbers can be found in some organisms and specialized cells. It depends on Mg(2+) as a cofactor.

Its subcellular location is the cytoplasm. The protein localises to the cytoskeleton. Tubulin is the major constituent of microtubules, a cylinder consisting of laterally associated linear protofilaments composed of alpha- and beta-tubulin heterodimers. Microtubules grow by the addition of GTP-tubulin dimers to the microtubule end, where a stabilizing cap forms. Below the cap, tubulin dimers are in GDP-bound state, owing to GTPase activity of alpha-tubulin. This is Tubulin beta chain from Euplotes crassus.